Consider the following 478-residue polypeptide: Spindle defective protein 3 (478 aa).

Over 1-24 (MDQMTVEEKILEHQELEDGSSSFR) the chain is Cytoplasmic. A helical membrane pass occupies residues 25–45 (WLVSSTVIAIGGATVALYISG). Residues 46 to 52 (KIDWKIP) are Extracellular-facing. A helical membrane pass occupies residues 53-73 (AIEAGLALTAGGTITCGYLWF). The Cytoplasmic segment spans residues 74 to 478 (KKRVKTVRKL…LRRVDDDIIE (405 aa)).

It localises to the mitochondrion. It is found in the mitochondrion outer membrane. In the first mitotic division in embryos, required for mitotic spindle alignment and asymmetric cell division. Required for motor-driven chromosome movement and homolog searching within the nucleus, and subsequently ensures homologous chromosome pairing during the prophase stage of meiosis. This chain is Spindle defective protein 3, found in Caenorhabditis elegans.